We begin with the raw amino-acid sequence, 440 residues long: P47(GAG-CRK) protein (440 aa).

The tract at residues 1–208 is gag first part; that stretch reads MEAVIKVISS…TPRGAEQPRA (208 aa). A PPXY motif motif is present at residues 174–177; that stretch reads PPPY. The interval 183–230 is disordered; that stretch reads YPSLAGVGEQQGQGGDTPRGAEQPRAGRGAGHRGLRRPAGRGQRVRPA. Residues 209–437 are CRK; it reads GRGAGHRGLR…PSSASVSTLT (229 aa). Over residues 212–221 the composition is skewed to basic residues; it reads AGHRGLRRPA. The SH2 domain occupies 248–354; it reads WYWGRLSRGD…LDTTTLIEPV (107 aa). The region spanning 368 to 428 is the SH3 domain; sequence EEVEYVRALF…PVPYVEKCRP (61 aa). Positions 438–440 are gag second part; sequence GGR.

In Avian sarcoma virus CT10 (Avian sarcoma virus (strain CT10)), this protein is P47(GAG-CRK) protein.